Here is a 274-residue protein sequence, read N- to C-terminus: Receptor-like protein 44 (274 aa).

Residues 1 to 24 (MTRSHRLLLLLLLIFQTAQRLTTA) form the signal peptide. Over 25–223 (DPNDEACLKN…PLQEMMMKSK (199 aa)) the chain is Extracellular. 3 N-linked (GlcNAc...) asparagine glycosylation sites follow: N48, N82, and N95. LRR repeat units follow at residues 96 to 121 (CTNLQSLDLSSNQISGVIPPEIQYLV), 123 to 144 (LAVLNLSSNHLSGEITPQLALC), 145 to 168 (AYLNVIDLHDNELSGQIPQQLGLL), and 169 to 192 (ARLSAFDVSNNKLSGQIPTYLSNR). N-linked (GlcNAc...) asparagine glycosylation is present at N127. 2 N-linked (GlcNAc...) asparagine glycosylation sites follow: N191 and N200. The helical transmembrane segment at 224-244 (GLSVMAIVGIGLGSGIASLMI) threads the bilayer. At 245–274 (SFTGVCLWLRITEKKIVEEEGKISQSMPDY) the chain is on the cytoplasmic side.

The protein belongs to the RLP family.

The protein localises to the cell membrane. This is Receptor-like protein 44 from Arabidopsis thaliana (Mouse-ear cress).